The sequence spans 428 residues: C4-dicarboxylate transport protein (428 aa).

The next 8 membrane-spanning stretches (helical) occupy residues 8–28 (SLYF…HFYP), 44–64 (LIKM…IAGM), 76–96 (VALL…LIIV), 142–162 (IGAF…LFGF), 184–206 (VIFG…AMAF), 222–242 (LIIC…GSIA), 326–346 (IVHQ…AAGV), and 352–372 (IVLA…LALI).

This sequence belongs to the dicarboxylate/amino acid:cation symporter (DAACS) (TC 2.A.23) family.

Its subcellular location is the cell inner membrane. Functionally, responsible for the transport of dicarboxylates such as succinate, fumarate, and malate from the periplasm across the membrane. The polypeptide is C4-dicarboxylate transport protein (Shigella flexneri).